The primary structure comprises 313 residues: Homoserine O-succinyltransferase (313 aa).

Catalysis depends on cysteine 142, which acts as the Acyl-thioester intermediate. Substrate is bound by residues lysine 163 and serine 192. Residue histidine 235 is the Proton acceptor of the active site. Glutamate 237 is an active-site residue. Residue arginine 249 coordinates substrate.

It belongs to the MetA family.

It is found in the cytoplasm. It catalyses the reaction L-homoserine + succinyl-CoA = O-succinyl-L-homoserine + CoA. It functions in the pathway amino-acid biosynthesis; L-methionine biosynthesis via de novo pathway; O-succinyl-L-homoserine from L-homoserine: step 1/1. Functionally, transfers a succinyl group from succinyl-CoA to L-homoserine, forming succinyl-L-homoserine. This chain is Homoserine O-succinyltransferase, found in Vibrio campbellii (strain ATCC BAA-1116).